Here is a 578-residue protein sequence, read N- to C-terminus: Cholesterol oxidase (578 aa).

FAD-binding residues include Gly15, Glu34, Gly85, Ala90, and Val230. His470 serves as the catalytic Proton acceptor. Position 503 (Gly503) interacts with FAD. A disordered region spans residues 529–551 (WPNKGETDRRPPQGEPYRRLAPI). The segment covering 533-546 (GETDRRPPQGEPYR) has biased composition (basic and acidic residues).

Belongs to the GMC oxidoreductase family. Requires FAD as cofactor.

It localises to the secreted. The catalysed reaction is cholesterol + O2 = cholest-5-en-3-one + H2O2. It catalyses the reaction cholest-5-en-3-one = cholest-4-en-3-one. It participates in steroid metabolism; cholesterol degradation. Functionally, bifunctional enzyme that catalyzes the oxidation and isomerization of cholesterol to cholestenone (cholest-4-en-3-one), an initial step in the cholesterol degradation process. Contributes to virulence. The sequence is that of Cholesterol oxidase (choD) from Mycobacterium tuberculosis (strain CDC 1551 / Oshkosh).